A 22-amino-acid polypeptide reads, in one-letter code: thr operon leader peptide (22 aa).

The interval 1-22 (MRNISLTTTIITTTDTTGNGAG) is disordered. Residues 7-22 (TTTIITTTDTTGNGAG) are compositionally biased toward low complexity.

This sequence belongs to the thr operon leader peptide family.

This protein is involved in control of the biosynthesis of threonine. This chain is thr operon leader peptide, found in Serratia marcescens.